The chain runs to 195 residues: ATP-dependent Clp protease proteolytic subunit (195 aa).

Ser-99 (nucleophile) is an active-site residue. Residue His-124 is part of the active site.

It belongs to the peptidase S14 family. As to quaternary structure, fourteen ClpP subunits assemble into 2 heptameric rings which stack back to back to give a disk-like structure with a central cavity, resembling the structure of eukaryotic proteasomes.

The protein resides in the cytoplasm. The catalysed reaction is Hydrolysis of proteins to small peptides in the presence of ATP and magnesium. alpha-casein is the usual test substrate. In the absence of ATP, only oligopeptides shorter than five residues are hydrolyzed (such as succinyl-Leu-Tyr-|-NHMec, and Leu-Tyr-Leu-|-Tyr-Trp, in which cleavage of the -Tyr-|-Leu- and -Tyr-|-Trp bonds also occurs).. Cleaves peptides in various proteins in a process that requires ATP hydrolysis. Has a chymotrypsin-like activity. Plays a major role in the degradation of misfolded proteins. The sequence is that of ATP-dependent Clp protease proteolytic subunit from Coxiella burnetii (strain RSA 331 / Henzerling II).